The chain runs to 1438 residues: DNA polymerase III PolC-type (1438 aa).

Residues 422–578 (YVVFDVETTG…YDTESTAYIF (157 aa)) enclose the Exonuclease domain.

This sequence belongs to the DNA polymerase type-C family. PolC subfamily.

It localises to the cytoplasm. The catalysed reaction is DNA(n) + a 2'-deoxyribonucleoside 5'-triphosphate = DNA(n+1) + diphosphate. Required for replicative DNA synthesis. This DNA polymerase also exhibits 3' to 5' exonuclease activity. This Staphylococcus haemolyticus (strain JCSC1435) protein is DNA polymerase III PolC-type.